Here is a 336-residue protein sequence, read N- to C-terminus: DNA-directed RNA polymerase subunit alpha (336 aa).

An alpha N-terminal domain (alpha-NTD) region spans residues methionine 1–glutamate 233. An alpha C-terminal domain (alpha-CTD) region spans residues isoleucine 247 to serine 336.

This sequence belongs to the RNA polymerase alpha chain family. Homodimer. The RNAP catalytic core consists of 2 alpha, 1 beta, 1 beta' and 1 omega subunit. When a sigma factor is associated with the core the holoenzyme is formed, which can initiate transcription.

The enzyme catalyses RNA(n) + a ribonucleoside 5'-triphosphate = RNA(n+1) + diphosphate. In terms of biological role, DNA-dependent RNA polymerase catalyzes the transcription of DNA into RNA using the four ribonucleoside triphosphates as substrates. The chain is DNA-directed RNA polymerase subunit alpha from Nitrosomonas europaea (strain ATCC 19718 / CIP 103999 / KCTC 2705 / NBRC 14298).